We begin with the raw amino-acid sequence, 185 residues long: Signal peptidase I (185 aa).

The Cytoplasmic portion of the chain corresponds to 1–20 (MKSEKEKTSKKSAVLDWAKA). The helical transmembrane segment at 21–41 (IIIAVVLAVLIRNFLFAPYVV) threads the bilayer. The Extracellular portion of the chain corresponds to 42–185 (DGESMEPTLH…FPFNEIRKTK (144 aa)). Catalysis depends on residues serine 45 and lysine 85.

The protein belongs to the peptidase S26 family.

It is found in the cell membrane. It carries out the reaction Cleavage of hydrophobic, N-terminal signal or leader sequences from secreted and periplasmic proteins.. This Bacillus amyloliquefaciens (Bacillus velezensis) protein is Signal peptidase I (sipA).